The chain runs to 425 residues: MPQESSDAKRIEPPRKVDFMLKPRFTNTVPDVPFDAKFMTCPFVPLGRFVEFQPAAIYRDYKHAVICDDDMGLNVDLIDLKKYDEDPIETEIDEKDNILLEDDGAAKLIAKRSQQHSKLVPWMRKTEYISTEFNRFGVTADRQETKLGYNLKKNQQVEDMYRDKQSQIDAINKTFEDVRKPVKEHYSKKGVKAVEESFVFPDFDHWKHLFAHVQFDGDTITTEFEEEDERQQARESSVIKAMEFEDQKFAAVFVPTIGCLTSFMDDLELERPFDEDMKYEFLLSREYTFKMEHLPPRDRDVFIMYHRNNVFQYNEVDCNVKMTRKPKMALSRKSKLTLTYRNPSELEQKDMNKREAELYEQPKTRKQEILEKIQEKKEEGGDSSDQSSDSDDDKPQKSRSDSSSDVSSDDDSPRKKEPTVDSDSD.

Residues 152–174 (KKNQQVEDMYRDKQSQIDAINKT) adopt a coiled-coil conformation. The tract at residues 331 to 425 (SRKSKLTLTY…KEPTVDSDSD (95 aa)) is disordered. Composition is skewed to basic and acidic residues over residues 344–380 (SELE…KEEG) and 393–402 (DKPQKSRSDS).

This sequence belongs to the PAF1 family. In terms of assembly, component of the PAF1 complex which consists of at least cdc-73, ctr-9, leo-1, pafo-1 and rtfo-1.

The protein resides in the nucleus. Functionally, component of the PAF1 complex which is a multifunctional complex involved in transcription initiation via genetic interactions with TATA-binding proteins, elongation and transcription-coupled histone modification. The protein is RNA polymerase II-associated factor 1 homolog of Caenorhabditis elegans.